Here is an 89-residue protein sequence, read N- to C-terminus: Large ribosomal subunit protein bL27 (89 aa).

The segment at 1–23 is disordered; sequence MAHKKAGGSSRNGRDSESKRLGV.

This sequence belongs to the bacterial ribosomal protein bL27 family.

The polypeptide is Large ribosomal subunit protein bL27 (Rhizobium meliloti (strain 1021) (Ensifer meliloti)).